Consider the following 332-residue polypeptide: Ferredoxin--NADP reductase 2 (332 aa).

FAD contacts are provided by Glu-37, Gln-45, Tyr-50, Val-90, Phe-124, Asp-285, and Thr-326.

Belongs to the ferredoxin--NADP reductase type 2 family. As to quaternary structure, homodimer. It depends on FAD as a cofactor.

The enzyme catalyses 2 reduced [2Fe-2S]-[ferredoxin] + NADP(+) + H(+) = 2 oxidized [2Fe-2S]-[ferredoxin] + NADPH. In Bacillus licheniformis (strain ATCC 14580 / DSM 13 / JCM 2505 / CCUG 7422 / NBRC 12200 / NCIMB 9375 / NCTC 10341 / NRRL NRS-1264 / Gibson 46), this protein is Ferredoxin--NADP reductase 2.